The sequence spans 216 residues: Enolase-phosphatase E1 (216 aa).

Residues Asp-8 and Glu-10 each coordinate Mg(2+). Residues 115–116 (SS) and Lys-149 each bind substrate. Residue Asp-172 participates in Mg(2+) binding.

This sequence belongs to the HAD-like hydrolase superfamily. MasA/MtnC family. As to quaternary structure, monomer. It depends on Mg(2+) as a cofactor.

It localises to the cytoplasm. Its subcellular location is the nucleus. It catalyses the reaction 5-methylsulfanyl-2,3-dioxopentyl phosphate + H2O = 1,2-dihydroxy-5-(methylsulfanyl)pent-1-en-3-one + phosphate. The protein operates within amino-acid biosynthesis; L-methionine biosynthesis via salvage pathway; L-methionine from S-methyl-5-thio-alpha-D-ribose 1-phosphate: step 3/6. Its pathway is amino-acid biosynthesis; L-methionine biosynthesis via salvage pathway; L-methionine from S-methyl-5-thio-alpha-D-ribose 1-phosphate: step 4/6. Functionally, bifunctional enzyme that catalyzes the enolization of 2,3-diketo-5-methylthiopentyl-1-phosphate (DK-MTP-1-P) into the intermediate 2-hydroxy-3-keto-5-methylthiopentenyl-1-phosphate (HK-MTPenyl-1-P), which is then dephosphorylated to form the acireductone 1,2-dihydroxy-3-keto-5-methylthiopentene (DHK-MTPene). This chain is Enolase-phosphatase E1 (utr4), found in Schizosaccharomyces pombe (strain 972 / ATCC 24843) (Fission yeast).